The primary structure comprises 1026 residues: Contactin-4 (1026 aa).

The N-terminal stretch at 1-18 (MRLPWELLVLQSFILCLA) is a signal peptide. 6 consecutive Ig-like C2-type domains span residues 32–117 (PSPV…AKLQ), 122–207 (DNFK…KVLG), 225–311 (PKIE…GQLT), 316–400 (PNWI…AELS), 406–493 (PDFS…GNLV), and 497–586 (PTRV…DRLS). Cystine bridges form between cysteine 50/cysteine 100, cysteine 144/cysteine 194, cysteine 247/cysteine 295, cysteine 337/cysteine 384, cysteine 429/cysteine 477, and cysteine 519/cysteine 576. N-linked (GlcNAc...) asparagine glycosylation is found at asparagine 65, asparagine 90, and asparagine 191. N-linked (GlcNAc...) asparagine glycosylation is found at asparagine 370, asparagine 375, and asparagine 466. Fibronectin type-III domains lie at 599–697 (PPEA…TEEA), 702–799 (TPAN…SAEE), 804–899 (PPAS…TRKP), and 900–995 (PPSQ…ISNA). The segment at 685-710 (PSRPSEKRRTEEALPEVTPANVSGGG) is disordered. The span at 687–696 (RPSEKRRTEE) shows a compositional bias: basic and acidic residues. N-linked (GlcNAc...) asparagine glycosylation is found at asparagine 705, asparagine 764, asparagine 858, asparagine 893, asparagine 911, asparagine 929, and asparagine 954. Residues 886 to 896 (GPSSATVNVTT) are compositionally biased toward polar residues. Residues 886 to 907 (GPSSATVNVTTRKPPPSQPPGN) form a disordered region. Serine 1000 carries the GPI-anchor amidated serine lipid modification. The propeptide at 1001–1026 (GASTSNACTLSAISTIMISLTARSSL) is removed in mature form.

This sequence belongs to the immunoglobulin superfamily. Contactin family. Interacts with PTPRG. As to expression, mainly expressed in brain. Highly expressed in cerebellum and weakly expressed in corpus callosum, caudate nucleus, amygdala and spinal cord. Also expressed in testis, pancreas, thyroid, uterus, small intestine and kidney. Not expressed in skeletal muscle. Isoform 2 is weakly expressed in cerebral cortex.

Its subcellular location is the cell membrane. It is found in the secreted. Its function is as follows. Contactins mediate cell surface interactions during nervous system development. Has some neurite outgrowth-promoting activity. May be involved in synaptogenesis. The sequence is that of Contactin-4 (CNTN4) from Homo sapiens (Human).